Here is a 643-residue protein sequence, read N- to C-terminus: Zinc finger protein 23 (643 aa).

The region spanning 1–43 (MLENYGNVASLGFPLLKPAVISQLEGGSELGGSSPLAAGTGLQ) is the KRAB domain. K157 is covalently cross-linked (Glycyl lysine isopeptide (Lys-Gly) (interchain with G-Cter in SUMO2)). The segment at 168–190 (FKCEELVEPFRCDSQLIQHQENN) adopts a C2H2-type 1; degenerate zinc-finger fold. C2H2-type zinc fingers lie at residues 196–218 (YQCSECGKAFSINEKLIWHQRLH), 224–246 (FKCVECGKSFSYSSHYITHQTIH), 252–274 (YQCKMCGKAFSVNGSLSRHQRIH), 280–302 (YQCKECGNGFSCSSAYITHQRVH), 308–330 (YECNDCGKAFNVNAKLIQHQRIH), 336–358 (YECNECGKGFRCSSQLRQHQSIH), 364–386 (YQCKECGKGFNNNTKLIQHQRIH), 392–414 (YECTECGKAFSVKGKLIQHQRIH), 420–442 (YECNECGKAFRCNSQFRQHLRIH), 448–470 (YECNECGKAFSVNGKLMRHQRIH), 476–498 (FECNECGRCFTSKRNLLDHHRIH), 504–526 (YQCKECGKAFSINAKLTRHQRIH), 532–554 (FKCMECEKAFSCSSNYIVHQRIH), 560–582 (FQCKECGKAFHVNAHLIRHQRSH), 588–610 (FRCVECGKGFSFSSDYIIHQTVH), and 616–638 (YMCSVCGKAFRFSFQLSQHQSVH).

It belongs to the krueppel C2H2-type zinc-finger protein family.

It localises to the nucleus. Its function is as follows. May be involved in transcriptional regulation. May have a role in embryonic development. The protein is Zinc finger protein 23 (ZNF23) of Homo sapiens (Human).